We begin with the raw amino-acid sequence, 55 residues long: Bowman-Birk type proteinase inhibitor B1 (55 aa).

Cystine bridges form between cysteine 6-cysteine 53, cysteine 12-cysteine 17, cysteine 26-cysteine 33, and cysteine 30-cysteine 45.

Belongs to the Bowman-Birk serine protease inhibitor family. In terms of tissue distribution, expressed in bulb (at protein level).

Serine protease inhibitor. Weakly inhibits trypsin (Ki = 167 nM). Does not inhibit bacterial subtilisin or mamallian chymotrypsin. This chain is Bowman-Birk type proteinase inhibitor B1, found in Hyacinthus orientalis (Common hyacinth).